Consider the following 476-residue polypeptide: 3-isopropylmalate dehydratase large subunit (476 aa).

Cys357, Cys417, and Cys420 together coordinate [4Fe-4S] cluster.

It belongs to the aconitase/IPM isomerase family. LeuC type 1 subfamily. As to quaternary structure, heterodimer of LeuC and LeuD. [4Fe-4S] cluster is required as a cofactor.

It catalyses the reaction (2R,3S)-3-isopropylmalate = (2S)-2-isopropylmalate. The protein operates within amino-acid biosynthesis; L-leucine biosynthesis; L-leucine from 3-methyl-2-oxobutanoate: step 2/4. In terms of biological role, catalyzes the isomerization between 2-isopropylmalate and 3-isopropylmalate, via the formation of 2-isopropylmaleate. The chain is 3-isopropylmalate dehydratase large subunit from Mycobacterium leprae (strain TN).